The following is a 94-amino-acid chain: DNA-binding protein HU (94 aa).

Residues Arg-55–Gly-94 form a disordered region. Residues Ala-84–Gly-94 show a composition bias toward basic and acidic residues.

This sequence belongs to the bacterial histone-like protein family.

In terms of biological role, histone-like DNA-binding protein which is capable of wrapping DNA to stabilize it, and thus to prevent its denaturation under extreme environmental conditions. The polypeptide is DNA-binding protein HU (hup) (Xylella fastidiosa (strain Temecula1 / ATCC 700964)).